The chain runs to 150 residues: MSGEDIVEIYTDGACSGNPGPGGWGVLMIYKDREKELCGGEQATTNNRMELMAAIQALEALKRDAHVRIHTDSNYVKDGITKWIHGWKKNGWKNAAKQPVKNAELWRRLEAAISTHQVSWHWVKGHSDHPENDRADALARQGMAPYLPSK.

The RNase H type-1 domain occupies 3–144; the sequence is GEDIVEIYTD…ADALARQGMA (142 aa). Mg(2+)-binding residues include aspartate 12, glutamate 50, aspartate 72, and aspartate 136.

Belongs to the RNase H family. In terms of assembly, monomer. It depends on Mg(2+) as a cofactor.

Its subcellular location is the cytoplasm. The catalysed reaction is Endonucleolytic cleavage to 5'-phosphomonoester.. Its function is as follows. Endonuclease that specifically degrades the RNA of RNA-DNA hybrids. This Parvibaculum lavamentivorans (strain DS-1 / DSM 13023 / NCIMB 13966) protein is Ribonuclease H.